We begin with the raw amino-acid sequence, 431 residues long: Glucose-1-phosphate adenylyltransferase (431 aa).

Lysine 39 lines the beta-D-fructose 1,6-bisphosphate pocket. AMP-binding residues include arginine 40, histidine 46, and arginine 52. Tyrosine 114 contacts alpha-D-glucose 1-phosphate. Arginine 130 provides a ligand contact to AMP. Residues glycine 179, 194-195, and serine 212 contribute to the alpha-D-glucose 1-phosphate site; that span reads EK. Arginine 386 provides a ligand contact to AMP. Beta-D-fructose 1,6-bisphosphate is bound at residue 429 to 431; that stretch reads QER.

This sequence belongs to the bacterial/plant glucose-1-phosphate adenylyltransferase family. In terms of assembly, homotetramer.

It catalyses the reaction alpha-D-glucose 1-phosphate + ATP + H(+) = ADP-alpha-D-glucose + diphosphate. Its pathway is glycan biosynthesis; glycogen biosynthesis. With respect to regulation, allosterically activated by fructose-1,6-bisphosphate (F16BP) and inhibited by AMP. Its function is as follows. Involved in the biosynthesis of ADP-glucose, a building block required for the elongation reactions to produce glycogen. Catalyzes the reaction between ATP and alpha-D-glucose 1-phosphate (G1P) to produce pyrophosphate and ADP-Glc. The chain is Glucose-1-phosphate adenylyltransferase from Klebsiella pneumoniae (strain 342).